A 154-amino-acid polypeptide reads, in one-letter code: Insulin-like growth factor 1 (154 aa).

A b region spans residues Gly50–Thr78. 3 disulfides stabilise this stretch: Cys55-Cys97, Cys67-Cys110, and Cys96-Cys101. The c stretch occupies residues Gly79–Thr90. The tract at residues Gly91–Ala111 is a. Residues Pro112 to Ala119 are d. Positions Arg120 to Met154 are cleaved as a propeptide — e peptide. The segment at Ser121 to Met154 is disordered. Residues Arg126–Leu139 show a composition bias toward basic and acidic residues. Over residues Lys140–Met154 the composition is skewed to polar residues.

It belongs to the insulin family. In terms of assembly, forms a ternary complex with IGFR1 and ITGAV:ITGB3. Forms a ternary complex with IGFR1 and ITGA6:ITGB4. Forms a ternary complex with IGFBP3 and ALS.

The protein localises to the secreted. The insulin-like growth factors, isolated from plasma, are structurally and functionally related to insulin but have a much higher growth-promoting activity. May be a physiological regulator of [1-14C]-2-deoxy-D-glucose (2DG) transport and glycogen synthesis in osteoblasts. Stimulates glucose transport in bone-derived osteoblastic (PyMS) cells and is effective at much lower concentrations than insulin, not only regarding glycogen and DNA synthesis but also with regard to enhancing glucose uptake. May play a role in synapse maturation. Ca(2+)-dependent exocytosis of IGF1 is required for sensory perception of smell in the olfactory bulb. Acts as a ligand for IGF1R. Binds to the alpha subunit of IGF1R, leading to the activation of the intrinsic tyrosine kinase activity which autophosphorylates tyrosine residues in the beta subunit thus initiating a cascade of down-stream signaling events leading to activation of the PI3K-AKT/PKB and the Ras-MAPK pathways. Binds to integrins ITGAV:ITGB3 and ITGA6:ITGB4. Its binding to integrins and subsequent ternary complex formation with integrins and IGFR1 are essential for IGF1 signaling. Induces the phosphorylation and activation of IGFR1, MAPK3/ERK1, MAPK1/ERK2 and AKT1. As part of the MAPK/ERK signaling pathway, acts as a negative regulator of apoptosis in cardiomyocytes via promotion of STUB1/CHIP-mediated ubiquitination and degradation of ICER-type isoforms of CREM. The chain is Insulin-like growth factor 1 from Bos taurus (Bovine).